The primary structure comprises 333 residues: Adenosine deaminase (333 aa).

His-12 and His-14 together coordinate Zn(2+). The substrate site is built by His-14, Asp-16, and Gly-170. Residue His-197 participates in Zn(2+) binding. Catalysis depends on Glu-200, which acts as the Proton donor. Asp-278 is a binding site for Zn(2+). Asp-279 is a substrate binding site.

Belongs to the metallo-dependent hydrolases superfamily. Adenosine and AMP deaminases family. Adenosine deaminase subfamily. The cofactor is Zn(2+).

It catalyses the reaction adenosine + H2O + H(+) = inosine + NH4(+). The enzyme catalyses 2'-deoxyadenosine + H2O + H(+) = 2'-deoxyinosine + NH4(+). Catalyzes the hydrolytic deamination of adenosine and 2-deoxyadenosine. This Escherichia coli (strain SE11) protein is Adenosine deaminase.